The following is a 159-amino-acid chain: 2-C-methyl-D-erythritol 2,4-cyclodiphosphate synthase (159 aa).

2 residues coordinate a divalent metal cation: aspartate 8 and histidine 10. 4-CDP-2-C-methyl-D-erythritol 2-phosphate is bound by residues aspartate 8–histidine 10 and histidine 34–serine 35. An a divalent metal cation-binding site is contributed by histidine 42. 4-CDP-2-C-methyl-D-erythritol 2-phosphate contacts are provided by residues aspartate 56–glycine 58, phenylalanine 61–aspartate 65, alanine 100–leucine 106, threonine 132–glutamate 135, phenylalanine 139, and arginine 142.

The protein belongs to the IspF family. As to quaternary structure, homotrimer. The cofactor is a divalent metal cation.

The catalysed reaction is 4-CDP-2-C-methyl-D-erythritol 2-phosphate = 2-C-methyl-D-erythritol 2,4-cyclic diphosphate + CMP. It functions in the pathway isoprenoid biosynthesis; isopentenyl diphosphate biosynthesis via DXP pathway; isopentenyl diphosphate from 1-deoxy-D-xylulose 5-phosphate: step 4/6. In terms of biological role, involved in the biosynthesis of isopentenyl diphosphate (IPP) and dimethylallyl diphosphate (DMAPP), two major building blocks of isoprenoid compounds. Catalyzes the conversion of 4-diphosphocytidyl-2-C-methyl-D-erythritol 2-phosphate (CDP-ME2P) to 2-C-methyl-D-erythritol 2,4-cyclodiphosphate (ME-CPP) with a corresponding release of cytidine 5-monophosphate (CMP). The sequence is that of 2-C-methyl-D-erythritol 2,4-cyclodiphosphate synthase from Salmonella typhimurium (strain LT2 / SGSC1412 / ATCC 700720).